The following is a 500-amino-acid chain: Cytochrome P450 6B4 (500 aa).

Heme is bound at residue Cys-443.

Belongs to the cytochrome P450 family. Requires heme as cofactor.

The protein resides in the endoplasmic reticulum membrane. It is found in the microsome membrane. The enzyme catalyses an organic molecule + reduced [NADPH--hemoprotein reductase] + O2 = an alcohol + oxidized [NADPH--hemoprotein reductase] + H2O + H(+). Functionally, enables the insect to feed on furanocoumarin-producing plants and evolved as an adaptation for detoxification of xanthotoxin and other furanocoumarins. This isozyme metabolizes isopimpinellin, imperatorin, and bergapten at high rates, xanthotoxin and psoralen at intermediate rates and angelicin, sphondin, and trioxsalen only at very low rates. The chain is Cytochrome P450 6B4 (CYP6B4) from Papilio glaucus (Eastern tiger swallowtail butterfly).